Reading from the N-terminus, the 277-residue chain is Release factor glutamine methyltransferase (277 aa).

Residues 117-121 (GTGTG), Asp-140, Trp-168, and Asn-183 each bind S-adenosyl-L-methionine. 183-186 (NPPY) is a substrate binding site.

The protein belongs to the protein N5-glutamine methyltransferase family. PrmC subfamily.

It catalyses the reaction L-glutaminyl-[peptide chain release factor] + S-adenosyl-L-methionine = N(5)-methyl-L-glutaminyl-[peptide chain release factor] + S-adenosyl-L-homocysteine + H(+). Its function is as follows. Methylates the class 1 translation termination release factors RF1/PrfA and RF2/PrfB on the glutamine residue of the universally conserved GGQ motif. This Shigella dysenteriae serotype 1 (strain Sd197) protein is Release factor glutamine methyltransferase.